The sequence spans 439 residues: sn-glycerol-3-phosphate-binding periplasmic protein UgpB (439 aa).

An N-terminal signal peptide occupies residues 1-25; sequence MFNNAIRKTSICVALTLAFSANAMA. Sn-glycerol 3-phosphate-binding residues include Tyr67, Glu91, Ser146, Ser272, Gly309, Tyr348, and Arg399.

It belongs to the bacterial solute-binding protein 1 family. In terms of assembly, the complex is composed of two ATP-binding proteins (UgpC), two transmembrane proteins (UgpA and UgpE) and a solute-binding protein (UgpB).

Its subcellular location is the periplasm. Part of the ABC transporter complex UgpBAEC involved in sn-glycerol-3-phosphate (G3P) import. Binds G3P. This is sn-glycerol-3-phosphate-binding periplasmic protein UgpB (ugpB) from Yersinia enterocolitica serotype O:8 / biotype 1B (strain NCTC 13174 / 8081).